Here is an 801-residue protein sequence, read N- to C-terminus: MDEDEFELQPQEPNSFFDGIGADATHMDGDQIVVEIQEAVFVSNIVDSDITVHNFVPDDPDSVVIQDVIEDVVIEEDVQCSDILEEADVSENVIIPEQVLESDVTEEVSLPHCTVPDDVLASDITSTSTSMPEHVLTSESMHVCDIGHVEHMVHDSVVEAEIITDPLTSDIVSEEVLVADCAPEAIIDASGISVDQQDNDKASCEDYLMISLDDAGKIEHDGSTGVTIDAESEMDPCKVDSTCPEVIKVYIFKADPGEDDLGGTVDIVESEPENDHGVELLDQNSSIRVPREKMVYMTVNDSQQEDEDLNVAEIADEVYMEVIVGEEDAAVAAAAAAVHEQQIDEDEMKTFVPIAWAAAYGNNSDGIENRNGTASALLHIDESAGLGRLAKQKPKKKRRPDSRQYQTAIIIGPDGHPLTVYPCMICGKKFKSRGFLKRHMKNHPEHLAKKKYHCTDCDYTTNKKISLHNHLESHKLTSKAEKAIECDECGKHFSHAGALFTHKMVHKEKGANKMHKCKFCEYETAEQGLLNRHLLAVHSKNFPHICVECGKGFRHPSELKKHMRIHTGEKPYQCQYCEYRSADSSNLKTHIKTKHSKEMPFKCDICLLTFSDTKEVQQHTLVHQESKTHQCLHCDHKSSNSSDLKRHVISVHTKDYPHKCEMCEKGFHRPSELKKHVAVHKGKKMHQCRHCDFKIADPFVLSRHILSVHTKDLPFRCKRCRKGFRQQNELKKHMKTHSGRKVYQCEYCEYSTTDASGFKRHVISIHTKDYPHRCEYCKKGFRRPSEKNQHIMRHHKEVGLP.

A Phosphoserine modification is found at S270. The C2H2-type 1 zinc finger occupies 421–443; the sequence is YPCMICGKKFKSRGFLKRHMKNH. Residues 452 to 474 form a C2H2-type 2; atypical zinc finger; the sequence is YHCTDCDYTTNKKISLHNHLESH. 11 C2H2-type zinc fingers span residues 484–506, 515–538, 544–566, 572–595, 601–623, 629–652, 658–680, 686–709, 715–737, 743–766, and 772–795; these read IECD…KMVH, HKCK…LAVH, HICV…MRIH, YQCQ…KTKH, FKCD…TLVH, HQCL…ISVH, HKCE…VAVH, HQCR…LSVH, FRCK…MKTH, YQCE…ISIH, and HRCE…MRHH.

The protein belongs to the krueppel C2H2-type zinc-finger protein family. ZFX/ZFY subfamily.

It localises to the nucleus. Functionally, probable transcriptional activator. Binds to the consensus sequence 5'-AGGCCY-3'. In Gorilla gorilla gorilla (Western lowland gorilla), this protein is Zinc finger Y-chromosomal protein (ZFY).